The primary structure comprises 628 residues: tRNA 5-methylaminomethyl-2-thiouridine biosynthesis bifunctional protein MnmC (628 aa).

The tract at residues 1-237 is tRNA (mnm(5)s(2)U34)-methyltransferase; it reads MSSYSPLVPP…KWHMTVGVRE (237 aa). The tract at residues 265 to 628 is FAD-dependent cmnm(5)s(2)U34 oxidoreductase; sequence VGGGLAGAGI…ADLLAAVAPR (364 aa).

The protein in the N-terminal section; belongs to the methyltransferase superfamily. tRNA (mnm(5)s(2)U34)-methyltransferase family. In the C-terminal section; belongs to the DAO family. FAD serves as cofactor.

The protein resides in the cytoplasm. The catalysed reaction is 5-aminomethyl-2-thiouridine(34) in tRNA + S-adenosyl-L-methionine = 5-methylaminomethyl-2-thiouridine(34) in tRNA + S-adenosyl-L-homocysteine + H(+). Catalyzes the last two steps in the biosynthesis of 5-methylaminomethyl-2-thiouridine (mnm(5)s(2)U) at the wobble position (U34) in tRNA. Catalyzes the FAD-dependent demodification of cmnm(5)s(2)U34 to nm(5)s(2)U34, followed by the transfer of a methyl group from S-adenosyl-L-methionine to nm(5)s(2)U34, to form mnm(5)s(2)U34. This Bordetella petrii (strain ATCC BAA-461 / DSM 12804 / CCUG 43448) protein is tRNA 5-methylaminomethyl-2-thiouridine biosynthesis bifunctional protein MnmC.